Reading from the N-terminus, the 130-residue chain is MIVRTTDEITGTHRDVAAANWRSKRIVLADDAVGFSFHETTIDADSVSEFHYRHHVEAVWIVEGTGTLTNHETGEEHPLRPGTMYLLNGHERHRVTCDTTMRMLCVFNPPVTGQEIHDETGAYPPAVQAS.

This sequence belongs to the ectoine synthase family.

The enzyme catalyses (2S)-4-acetamido-2-aminobutanoate = L-ectoine + H2O. Its pathway is amine and polyamine biosynthesis; ectoine biosynthesis; L-ectoine from L-aspartate 4-semialdehyde: step 3/3. Catalyzes the circularization of gamma-N-acetyl-alpha,gamma-diaminobutyric acid (ADABA) to ectoine (1,4,5,6-tetrahydro-2-methyl-4-pyrimidine carboxylic acid), which is an excellent osmoprotectant. The chain is L-ectoine synthase from Mycolicibacterium gilvum (strain PYR-GCK) (Mycobacterium gilvum (strain PYR-GCK)).